The following is a 141-amino-acid chain: Hemoglobin subunit alpha-D (141 aa).

Positions 1 to 141 (MLTADDKKLL…VAAVLAEKYR (141 aa)) constitute a Globin domain. Residues H58 and H87 each coordinate heme b.

It belongs to the globin family. In terms of assembly, heterotetramer of two alpha-D chains and two beta chains. Red blood cells.

Functionally, involved in oxygen transport from the lung to the various peripheral tissues. The sequence is that of Hemoglobin subunit alpha-D (HBAD) from Anser anser anser (Western greylag goose).